The chain runs to 138 residues: Large ribosomal subunit protein uL11c (138 aa).

The protein belongs to the universal ribosomal protein uL11 family. In terms of assembly, part of the ribosomal stalk of the 50S ribosomal subunit. Interacts with L10 and the large rRNA to form the base of the stalk. L10 forms an elongated spine to which L12 dimers bind in a sequential fashion forming a multimeric L10(L12)X complex.

Its subcellular location is the plastid. The protein resides in the chloroplast. Its function is as follows. Forms part of the ribosomal stalk which helps the ribosome interact with GTP-bound translation factors. The protein is Large ribosomal subunit protein uL11c of Cyanidioschyzon merolae (strain NIES-3377 / 10D) (Unicellular red alga).